The sequence spans 824 residues: Fibroblast growth factor receptor 2 (824 aa).

The N-terminal stretch at 1–21 is a signal peptide; sequence MFSWSYLMGLVMVATATLSLA. Residues 22-374 lie on the Extracellular side of the membrane; the sequence is RPSYNIAEDT…LDSSSSEYTE (353 aa). An Ig-like C2-type 1 domain is found at 25–125; the sequence is YNIAEDTTLE…ETRYFIVNIT (101 aa). Residues C62 and C107 are joined by a disulfide bond. 3 N-linked (GlcNAc...) asparagine glycosylation sites follow: N83, N123, and N128. The disordered stretch occupies residues 125-152; that stretch reads TDGNSSGDDEDDNDGSEDFTNDNNHKRA. The segment covering 131–144 has biased composition (acidic residues); sequence GDDEDDNDGSEDFT. Ig-like C2-type domains lie at 153–246 and 254–356; these read PYWT…YHLD and PPIL…AWLT. The segment at 160-177 is heparin-binding; it reads KLEKKLHAVPAANTVKFR. C178 and C230 are oxidised to a cystine. N227, N240, N264, N295, N316, and N329 each carry an N-linked (GlcNAc...) asparagine glycan. C277 and C340 are joined by a disulfide. A helical transmembrane segment spans residues 375–395; sequence IAIYCVGGFLIACMIGTIMMC. Topologically, residues 396-824 are cytoplasmic; it reads HMKGRGKKSD…PLKHEATQPA (429 aa). Residue Y463 is modified to Phosphotyrosine; by autocatalysis. Residues 478-767 form the Protein kinase domain; it reads LTLGKPLGEG…LTQTTNEEYL (290 aa). ATP contacts are provided by residues 484–492, K514, 562–564, and N568; these read LGEGCFGQV and EYA. A Phosphotyrosine; by autocatalysis modification is found at Y583. D623 functions as the Proton acceptor in the catalytic mechanism. A phosphotyrosine; by autocatalysis mark is found at Y653, Y654, and Y766. The segment at 801-824 is disordered; it reads SMNLAFPNPNTQMAPLKHEATQPA.

This sequence belongs to the protein kinase superfamily. Tyr protein kinase family. Fibroblast growth factor receptor subfamily. As to quaternary structure, monomer. Homodimer after ligand binding. Post-translationally, autophosphorylated. Binding of FGF family members together with heparan sulfate proteoglycan or heparin promotes receptor dimerization and autophosphorylation on tyrosine residues. Autophosphorylation occurs in trans between the two FGFR molecules present in the dimer. N-glycosylated in the endoplasmic reticulum. The N-glycan chains undergo further maturation to an Endo H-resistant form in the Golgi apparatus. In terms of processing, ubiquitinated. FGFR2 is rapidly ubiquitinated after autophosphorylation, leading to internalization and degradation. Subject to degradation both in lysosomes and by the proteasome.

The protein localises to the cell membrane. It is found in the golgi apparatus. The protein resides in the cytoplasmic vesicle. It carries out the reaction L-tyrosyl-[protein] + ATP = O-phospho-L-tyrosyl-[protein] + ADP + H(+). Its activity is regulated as follows. Present in an inactive conformation in the absence of bound ligand. Ligand binding leads to dimerization and activation by autophosphorylation on tyrosine residues. Functionally, tyrosine-protein kinase that acts as a cell-surface receptor for fibroblast growth factors and plays an essential role in the regulation of cell proliferation, differentiation, migration and apoptosis, and in the regulation of embryonic development. Required for normal embryonic patterning, limb bud development, lung morphogenesis, osteogenesis and skin development. Plays an essential role in the regulation of osteoblast differentiation, proliferation and apoptosis, and is required for normal skeleton development. Promotes cell proliferation in keratinocytes and immature osteoblasts, but promotes apoptosis in differentiated osteoblasts. Phosphorylates PLCG1, FRS2 and PAK4. Ligand binding leads to the activation of several signaling cascades. Activation of PLCG1 leads to the production of the cellular signaling molecules diacylglycerol and inositol 1,4,5-trisphosphate. Phosphorylation of FRS2 triggers recruitment of GRB2, GAB1, PIK3R1 and SOS1, and mediates activation of RAS, MAPK1/ERK2, MAPK3/ERK1 and the MAP kinase signaling pathway, as well as of the AKT1 signaling pathway. FGFR2 signaling is down-regulated by ubiquitination, internalization and degradation. Mutations that lead to constitutive kinase activation or impair normal FGFR2 maturation, internalization and degradation lead to aberrant signaling. Over-expressed FGFR2 promotes activation of STAT1. This is Fibroblast growth factor receptor 2 (FGFR2) from Pleurodeles waltl (Iberian ribbed newt).